The primary structure comprises 494 residues: MTITFQDFNLSSDLMKAINRMGFEEATPIQAQTIPLGLSNKDVIGQAQTGTGKTAAFGIPLVEKINPESPNIQAIVIAPTRELAIQVSEELYKIGQDKRAKVLPIYGGQDIGRQIRALKKNPNIIVGTPGRLLDHINRRTIRLNNVNTVVMDEADEMLNMGFIDDIESILSNVPSEHQTLLFSATMPAPIKRIAERFMTEPEHVKVKAKEMTVSNIQQFYLEVQERKKFDTLTRLLDIQSPELAIVFGRTKRRVDELAEALNLRGYAAEGIHGDLTQAKRMVALRKFKEGAIEVLVATDVAARGLDISGVTHVYNFDVPQDPESYVHRIGRTGRAGKTGMAMTFITPREKSMLRAIEQTTKRKMDRMKEPTLDEALEGQQQVTVERLRTTISENNLNFYMTAAAELLEDHDAVTVVAAAIKMATKEPDDTPVRLTDEAPMVSKRYKNQRSSKRRDGQGGGYRGGKGKSNNRSSYDKKRSNDRRSSGDRRQKKSY.

The Q motif motif lies at 3–31; it reads ITFQDFNLSSDLMKAINRMGFEEATPIQA. The region spanning 34 to 204 is the Helicase ATP-binding domain; that stretch reads IPLGLSNKDV…ERFMTEPEHV (171 aa). 47–54 contributes to the ATP binding site; it reads AQTGTGKT. A DEAD box motif is present at residues 152-155; the sequence is DEAD. Residues 215 to 375 form the Helicase C-terminal domain; that stretch reads NIQQFYLEVQ…RMKEPTLDEA (161 aa). Residues 413–494 are required for dimerization or oligomerization; it reads VTVVAAAIKM…SGDRRQKKSY (82 aa). The tract at residues 429–494 is disordered; the sequence is DTPVRLTDEA…SGDRRQKKSY (66 aa). Over residues 443-452 the composition is skewed to basic residues; the sequence is KRYKNQRSSK. Over residues 473-488 the composition is skewed to basic and acidic residues; the sequence is SYDKKRSNDRRSSGDR.

This sequence belongs to the DEAD box helicase family. CshA subfamily. As to quaternary structure, homodimer or oligomer. May interact with RNA helicases CshB and DbpA (DeaD). Probably a component of the RNA degradosome complex composed of rny, rnjA, rnjB, pnp, pfkA and eno, and possibly also rnpA (although rnjA and rnjB's presence is unclear). Interacts with ribosomal proteins L1 and L3 (rplA and rplC) and the protein component of RNase RnpA. Interacts with the RNA polymerase core. Mg(2+) serves as cofactor.

The protein resides in the cytoplasm. The protein localises to the nucleoid. It localises to the cell membrane. It carries out the reaction ATP + H2O = ADP + phosphate + H(+). With respect to regulation, RNA helicase activity is inhibited by EDTA. In terms of biological role, the most abundant DEAD-box RNA helicase. An ATP-dependent RNA helicase with RNA-dependent ATPase activity. May work in conjunction with the cold shock proteins to ensure proper initiation of transcription at low and optimal temperatures. In vitro, unwinds dsRNA in both 5'- and 3'- directions. Plays a role in ribosomal 50S subunit assembly. Its deletion leads to changes in mRNA levels for over 200 transcripts. In Bacillus subtilis (strain 168), this protein is DEAD-box ATP-dependent RNA helicase CshA.